The sequence spans 148 residues: Large ribosomal subunit protein bL9 (148 aa).

This sequence belongs to the bacterial ribosomal protein bL9 family.

Its function is as follows. Binds to the 23S rRNA. The protein is Large ribosomal subunit protein bL9 of Solibacter usitatus (strain Ellin6076).